An 87-amino-acid chain; its full sequence is Defensin-like protein 218 (87 aa).

The signal sequence occupies residues 1–19 (MKTIVCFLTILILVSSCES). Cystine bridges form between cysteine 51–cysteine 70, cysteine 54–cysteine 75, and cysteine 58–cysteine 77.

Belongs to the DEFL family.

It is found in the secreted. The sequence is that of Defensin-like protein 218 from Arabidopsis thaliana (Mouse-ear cress).